The chain runs to 401 residues: DNA damage checkpoint control protein RAD17 (401 aa).

A disordered region spans residues 367–393 (KKIKLPSEEENNKNRESEDEENHCKYP). Over residues 371-393 (LPSEEENNKNRESEDEENHCKYP) the composition is skewed to basic and acidic residues. S383 carries the post-translational modification Phosphoserine.

The protein belongs to the rad1 family. In terms of assembly, component of the checkpoint clamp complex composed of DDC1, MEC3 and RAD17. The interaction with MEC3 is performed in a RAD17-dependent manner. The checkpoint clamp complex loads onto DNA. Interacts with the DNA polymerase zeta subunit REV7. 2 RAD17 subunits also form a heterotrimer with one MEC3 subunit.

The protein resides in the nucleus. Its function is as follows. Component of the checkpoint clamp complex involved in the surveillance mechanism that allows the DNA repair pathways to act to restore the integrity of the DNA prior to DNA synthesis or separation of the replicated chromosomes. Associates with sites of DNA damage and modulates the MEC1 signaling pathway and the activation of RAD53 in response to DNA damage at phase G1. The complex also physically regulates DNA polymerase zeta-dependent mutagenesis by controlling the access of polymerase zeta to damaged DNA. Contrary to its human counterpart, the 9-1-1 complex, the checkpoint clamp complex shows no detectable exonuclease activity. In Saccharomyces cerevisiae (strain ATCC 204508 / S288c) (Baker's yeast), this protein is DNA damage checkpoint control protein RAD17 (RAD17).